A 707-amino-acid polypeptide reads, in one-letter code: Elongation factor G (707 aa).

Positions 8–297 (ERVRNIGIAA…AVVDYLPSPV (290 aa)) constitute a tr-type G domain. GTP-binding positions include 17-24 (AHIDAGKT), 96-100 (DTPGH), and 150-153 (NKMD).

Belongs to the TRAFAC class translation factor GTPase superfamily. Classic translation factor GTPase family. EF-G/EF-2 subfamily.

Its subcellular location is the cytoplasm. Functionally, catalyzes the GTP-dependent ribosomal translocation step during translation elongation. During this step, the ribosome changes from the pre-translocational (PRE) to the post-translocational (POST) state as the newly formed A-site-bound peptidyl-tRNA and P-site-bound deacylated tRNA move to the P and E sites, respectively. Catalyzes the coordinated movement of the two tRNA molecules, the mRNA and conformational changes in the ribosome. In Synechococcus sp. (strain JA-2-3B'a(2-13)) (Cyanobacteria bacterium Yellowstone B-Prime), this protein is Elongation factor G.